The chain runs to 456 residues: RuvB-like helicase 1 (456 aa).

70–77 (GPPGTGKT) provides a ligand contact to ATP.

Belongs to the RuvB family. In terms of assembly, forms homohexameric rings. May form a dodecamer with rept made of two stacked hexameric rings. Component of the chromatin remodeling Ino80 complex.

The protein resides in the nucleus. It carries out the reaction ATP + H2O = ADP + phosphate + H(+). Functionally, acts as a transcriptional coactivator in Wg signaling caused by altered arm signaling. Pont and rept interfere antagonistically with nuclear arm signaling function, and are required to enhance or reduce arm activity, respectively. Also an essential cofactor for the normal function of Myc; required for cellular proliferation and growth. Its function is as follows. Proposed core component of the chromatin remodeling Ino80 complex which is involved in transcriptional regulation, DNA replication and probably DNA repair. The sequence is that of RuvB-like helicase 1 from Drosophila pseudoobscura pseudoobscura (Fruit fly).